The following is a 718-amino-acid chain: Protein Smaug homolog 1 (718 aa).

Phosphoserine is present on Ser-168. Disordered stretches follow at residues 278–323, 416–474, and 572–601; these read ARGP…EEGS, KAYS…LQPH, and NRGF…QYQI. An SAM domain is found at 323 to 391; sequence SGMKDVPAWL…ERQNLLKSLE (69 aa). Phosphoserine is present on Ser-420. Thr-424 carries the post-translational modification Phosphothreonine. Residues 453 to 466 are compositionally biased toward low complexity; sequence GAAATGATATPSAG. Omega-N-methylarginine is present on Arg-573. Ser-580 carries the phosphoserine modification.

The protein belongs to the SMAUG family.

The protein resides in the cytoplasm. Its subcellular location is the cell projection. The protein localises to the dendrite. It localises to the synapse. It is found in the synaptosome. Functionally, acts as a translational repressor of SRE-containing messengers. This is Protein Smaug homolog 1 (SAMD4A) from Homo sapiens (Human).